The following is a 376-amino-acid chain: Protein RecA (376 aa).

ATP is bound at residue G66–T73. The tract at residues V329–S376 is disordered. Over residues A338 to S376 the composition is skewed to low complexity.

Belongs to the RecA family.

The protein localises to the cytoplasm. In terms of biological role, can catalyze the hydrolysis of ATP in the presence of single-stranded DNA, the ATP-dependent uptake of single-stranded DNA by duplex DNA, and the ATP-dependent hybridization of homologous single-stranded DNAs. It interacts with LexA causing its activation and leading to its autocatalytic cleavage. This Streptomyces rimosus protein is Protein RecA.